The primary structure comprises 264 residues: Thymidylate synthase (264 aa).

Arg21 lines the dUMP pocket. His51 is a binding site for (6R)-5,10-methylene-5,6,7,8-tetrahydrofolate. A dUMP-binding site is contributed by 126-127 (RR). Cys146 acts as the Nucleophile in catalysis. Residues 166–169 (RSAD), Asn177, and 207–209 (HLY) each bind dUMP. Position 169 (Asp169) interacts with (6R)-5,10-methylene-5,6,7,8-tetrahydrofolate. Ala263 is a (6R)-5,10-methylene-5,6,7,8-tetrahydrofolate binding site.

The protein belongs to the thymidylate synthase family. Bacterial-type ThyA subfamily. In terms of assembly, homodimer.

The protein resides in the cytoplasm. It catalyses the reaction dUMP + (6R)-5,10-methylene-5,6,7,8-tetrahydrofolate = 7,8-dihydrofolate + dTMP. The protein operates within pyrimidine metabolism; dTTP biosynthesis. Functionally, catalyzes the reductive methylation of 2'-deoxyuridine-5'-monophosphate (dUMP) to 2'-deoxythymidine-5'-monophosphate (dTMP) while utilizing 5,10-methylenetetrahydrofolate (mTHF) as the methyl donor and reductant in the reaction, yielding dihydrofolate (DHF) as a by-product. This enzymatic reaction provides an intracellular de novo source of dTMP, an essential precursor for DNA biosynthesis. This chain is Thymidylate synthase, found in Chromobacterium violaceum (strain ATCC 12472 / DSM 30191 / JCM 1249 / CCUG 213 / NBRC 12614 / NCIMB 9131 / NCTC 9757 / MK).